A 99-amino-acid chain; its full sequence is Small ribosomal subunit protein uS14c (99 aa).

A disordered region spans residues 46–66; it reads LQSSPRNSAPTRLHRRCSSTG.

This sequence belongs to the universal ribosomal protein uS14 family. As to quaternary structure, part of the 30S ribosomal subunit.

The protein localises to the plastid. It localises to the chloroplast. Functionally, binds 16S rRNA, required for the assembly of 30S particles. In Pinus thunbergii (Japanese black pine), this protein is Small ribosomal subunit protein uS14c.